Reading from the N-terminus, the 308-residue chain is MQELRLVLILVGALAIAALLFHGLWTSRKETSSKFGKKVDIDFDSESEDEQPTPARGFEQPKESVVDVRQERKEPAFGRDEPNLSQDPLFDGGTDAILKQNAEEKEVEPKVIEEPIMTRPSISESMVKEEPTISFSAIDDVEPTFHKESSVVPAPVEPVIIPEIEPEVVPEPEEDVIVINVHGMGNERFNGNRLFNSLEQNGLIFGDMAIYHRHSDLAGSGKVVFSTANMVAPGHFQVPEGEEFSTPGISFFLPLPCNGEADYNFKLMLQTAQLVASELGGNVLDEKRNMLTPNKIDEYKQRVKVFCN.

Topologically, residues 1–5 (MQELR) are periplasmic. The helical transmembrane segment at 6–26 (LVLILVGALAIAALLFHGLWT) threads the bilayer. Residues 27-308 (SRKETSSKFG…YKQRVKVFCN (282 aa)) lie on the Cytoplasmic side of the membrane. The tract at residues 43-90 (FDSESEDEQPTPARGFEQPKESVVDVRQERKEPAFGRDEPNLSQDPLF) is disordered. Basic and acidic residues predominate over residues 59-82 (EQPKESVVDVRQERKEPAFGRDEP).

This sequence belongs to the ZipA family. As to quaternary structure, interacts with FtsZ via their C-terminal domains.

It localises to the cell inner membrane. Essential cell division protein that stabilizes the FtsZ protofilaments by cross-linking them and that serves as a cytoplasmic membrane anchor for the Z ring. Also required for the recruitment to the septal ring of downstream cell division proteins. This is Cell division protein ZipA from Aliivibrio salmonicida (strain LFI1238) (Vibrio salmonicida (strain LFI1238)).